The sequence spans 733 residues: Methionine--tRNA ligase (733 aa).

The 'HIGH' region motif lies at 11–21; sequence PYANGPIHAGH. Residues C143, C146, C156, and C159 each contribute to the Zn(2+) site. A 'KMSKS' region motif is present at residues 345-349; that stretch reads KFSTS. T348 is a binding site for ATP. Residues 633-733 form the tRNA-binding domain; the sequence is DFMKLDLRVG…KEVKLGARIR (101 aa).

Belongs to the class-I aminoacyl-tRNA synthetase family. MetG type 1 subfamily. Homodimer. Zn(2+) serves as cofactor.

The protein resides in the cytoplasm. It catalyses the reaction tRNA(Met) + L-methionine + ATP = L-methionyl-tRNA(Met) + AMP + diphosphate. Its function is as follows. Is required not only for elongation of protein synthesis but also for the initiation of all mRNA translation through initiator tRNA(fMet) aminoacylation. The sequence is that of Methionine--tRNA ligase from Thermococcus onnurineus (strain NA1).